The sequence spans 345 residues: Tryptophan--tRNA ligase (345 aa).

ATP is bound by residues 12–14 (RPT) and 20–21 (GH). The 'HIGH' region signature appears at 13–21 (PTGKLHLGH). Residue Asp144 coordinates L-tryptophan. ATP is bound by residues 156 to 158 (GKD), Leu194, and 202 to 206 (KMSKS). Residues 202 to 206 (KMSKS) carry the 'KMSKS' region motif.

Belongs to the class-I aminoacyl-tRNA synthetase family. In terms of assembly, homodimer.

Its subcellular location is the cytoplasm. The enzyme catalyses tRNA(Trp) + L-tryptophan + ATP = L-tryptophyl-tRNA(Trp) + AMP + diphosphate + H(+). In terms of biological role, catalyzes the attachment of tryptophan to tRNA(Trp). This Chlamydia caviae (strain ATCC VR-813 / DSM 19441 / 03DC25 / GPIC) (Chlamydophila caviae) protein is Tryptophan--tRNA ligase.